We begin with the raw amino-acid sequence, 349 residues long: Beta-hexosaminidase (349 aa).

Residues D64, R72, R138, and 168-169 contribute to the substrate site; that span reads KH. Residue H181 is the Proton donor/acceptor of the active site. The Nucleophile role is filled by D252.

Belongs to the glycosyl hydrolase 3 family. NagZ subfamily.

It localises to the cytoplasm. It carries out the reaction Hydrolysis of terminal non-reducing N-acetyl-D-hexosamine residues in N-acetyl-beta-D-hexosaminides.. It participates in cell wall biogenesis; peptidoglycan recycling. In terms of biological role, plays a role in peptidoglycan recycling by cleaving the terminal beta-1,4-linked N-acetylglucosamine (GlcNAc) from peptide-linked peptidoglycan fragments, giving rise to free GlcNAc, anhydro-N-acetylmuramic acid and anhydro-N-acetylmuramic acid-linked peptides. This chain is Beta-hexosaminidase, found in Methylobacillus flagellatus (strain ATCC 51484 / DSM 6875 / VKM B-1610 / KT).